The sequence spans 141 residues: Methylglyoxal synthase (141 aa).

The 141-residue stretch at 1–141 (MNIALIAHDK…PKLQKNKSDK (141 aa)) folds into the MGS-like domain. Residues histidine 8, lysine 12, and 34-37 (TGTT) each bind substrate. Aspartate 60 acts as the Proton donor/acceptor in catalysis. Histidine 87 lines the substrate pocket.

Belongs to the methylglyoxal synthase family.

The catalysed reaction is dihydroxyacetone phosphate = methylglyoxal + phosphate. Catalyzes the formation of methylglyoxal from dihydroxyacetone phosphate. This Caldicellulosiruptor bescii (strain ATCC BAA-1888 / DSM 6725 / KCTC 15123 / Z-1320) (Anaerocellum thermophilum) protein is Methylglyoxal synthase.